Consider the following 385-residue polypeptide: Pepsin A (385 aa).

Positions 1–15 (MKWLLLLSLVVLSEC) are cleaved as a signal peptide. The propeptide at 16–59 (LVKVPLVRKKSLRQNLIKNGKLKDFLKTHKHNPASKYFPEAAAL) is activation peptide. The region spanning 73-382 (YFGTIGIGTP…DRANNKVGLA (310 aa)) is the Peptidase A1 domain. D91 is an active-site residue. C104 and C109 form a disulfide bridge. S127 is modified (phosphoserine). Cysteines 265 and 269 form a disulfide. D274 is an active-site residue. A disulfide bond links C308 and C341.

Belongs to the peptidase A1 family. Post-translationally, minor amounts of the active enzyme occur with 'Ala-58' at the amino end.

The protein localises to the secreted. The catalysed reaction is Preferential cleavage: hydrophobic, preferably aromatic, residues in P1 and P1' positions. Cleaves 1-Phe-|-Val-2, 4-Gln-|-His-5, 13-Glu-|-Ala-14, 14-Ala-|-Leu-15, 15-Leu-|-Tyr-16, 16-Tyr-|-Leu-17, 23-Gly-|-Phe-24, 24-Phe-|-Phe-25 and 25-Phe-|-Tyr-26 bonds in the B chain of insulin.. Shows particularly broad specificity; although bonds involving phenylalanine and leucine are preferred, many others are also cleaved to some extent. This chain is Pepsin A (PGA), found in Sus scrofa (Pig).